The primary structure comprises 514 residues: F-box-like/WD repeat-containing protein TBL1XR1 (514 aa).

An N-acetylserine modification is found at S2. A LisH domain is found at 4-36; that stretch reads SSDEVNFLVYRYLQESGFSHSAFTFGIESHISQ. The F-box-like domain occupies 41 to 86; sequence GALVPPAALISIIQKGLQYVEAEVSINEDGTLFDGRPIESLSLIDA. Residue K102 is modified to N6-acetyllysine. Residues 114 to 139 are disordered; sequence AAAATNQQGSAKNGENTANGEENGAH. Low complexity predominate over residues 124-135; the sequence is AKNGENTANGEE. WD repeat units lie at residues 167–206, 223–262, 264–303, 306–344, 347–386, 389–437, 440–479, and 481–513; these read GHES…TSGP, PSNK…ASTL, QHKG…AKQQ, FHSA…PIKT, GHTN…CVHD, AHNK…CIHT, KHQE…LVHS, and RGTG…LDLR. A Glycyl lysine isopeptide (Lys-Gly) (interchain with G-Cter in SUMO2) cross-link involves residue K277.

This sequence belongs to the WD repeat EBI family. In terms of assembly, component of the N-Cor repressor complex, at least composed of NCOR1, NCOR2, HDAC3, TBL1X, TBL1XR1, CORO2A and GPS2. Probable component of some E3 ubiquitin ligase complex. Interacts with histones H2B and H4. Interacts with MECP2; bridges interaction between MECP2 and NCOR1. Interacts with USP44.

It localises to the nucleus. Functionally, F-box-like protein involved in the recruitment of the ubiquitin/19S proteasome complex to nuclear receptor-regulated transcription units. Plays an essential role in transcription activation mediated by nuclear receptors. Probably acts as integral component of the N-Cor corepressor complex that mediates the recruitment of the 19S proteasome complex, leading to the subsequent proteasomal degradation of N-Cor complex, thereby allowing cofactor exchange, and transcription activation. The polypeptide is F-box-like/WD repeat-containing protein TBL1XR1 (Tbl1xr1) (Mus musculus (Mouse)).